A 350-amino-acid polypeptide reads, in one-letter code: MTISPRDEQNRSVDLWFAYKVPKLTKDTDSDSATGYEYVYYDREIGSVQKSPNRMNNPKGALFYTLDSIFGDPGSTTGWILYNDEMPADADRSNNATLGHTKGVIAFDIASNSALWLLHSWPKYTSPSAPGVPTPLYGQTFLCVSLDLETAGKIAAQMALHQQPQVYLPRTAGLDHASPLYTLTQPLNASAPGDSDSLDFKTRGGAPFKVIAKNRKWGKDFWNDLVGPTLKADMDVETWIRGKIPPILDSDGVHKTYDIKFIDLRKLGAPWAWPETQDHAKWGITTTDDWVCVGDINRMVTQEKRGGGTIAFQDPQLWKALSQTDLIVPPPGKTEAQARAMIHRTHQPAD.

Belongs to the DNase II family.

This is Putative deoxyribonuclease-2 from Burkholderia pseudomallei (strain 1710b).